Consider the following 179-residue polypeptide: Large ribosomal subunit protein uL6 (179 aa).

The protein belongs to the universal ribosomal protein uL6 family. As to quaternary structure, part of the 50S ribosomal subunit.

In terms of biological role, this protein binds to the 23S rRNA, and is important in its secondary structure. It is located near the subunit interface in the base of the L7/L12 stalk, and near the tRNA binding site of the peptidyltransferase center. In Streptomyces avermitilis (strain ATCC 31267 / DSM 46492 / JCM 5070 / NBRC 14893 / NCIMB 12804 / NRRL 8165 / MA-4680), this protein is Large ribosomal subunit protein uL6.